Consider the following 57-residue polypeptide: Small ribosomal subunit protein bS21 (57 aa).

A disordered region spans residues Q22–K57. Over residues K33–K57 the composition is skewed to basic residues.

This sequence belongs to the bacterial ribosomal protein bS21 family.

The protein is Small ribosomal subunit protein bS21 of Natranaerobius thermophilus (strain ATCC BAA-1301 / DSM 18059 / JW/NM-WN-LF).